The sequence spans 86 residues: Small ribosomal subunit protein bS20 (86 aa).

It belongs to the bacterial ribosomal protein bS20 family.

Its function is as follows. Binds directly to 16S ribosomal RNA. This chain is Small ribosomal subunit protein bS20, found in Aliarcobacter butzleri (strain RM4018) (Arcobacter butzleri).